We begin with the raw amino-acid sequence, 250 residues long: ATP synthase subunit b 2 (250 aa).

A helical membrane pass occupies residues 2–22 (LIDWFTVFAQILNFVILLGLL).

Belongs to the ATPase B chain family. F-type ATPases have 2 components, F(1) - the catalytic core - and F(0) - the membrane proton channel. F(1) has five subunits: alpha(3), beta(3), gamma(1), delta(1), epsilon(1). F(0) has four main subunits: a(1), b(1), b'(1) and c(10-14). The alpha and beta chains form an alternating ring which encloses part of the gamma chain. F(1) is attached to F(0) by a central stalk formed by the gamma and epsilon chains, while a peripheral stalk is formed by the delta, b and b' chains.

It is found in the cellular thylakoid membrane. Its function is as follows. F(1)F(0) ATP synthase produces ATP from ADP in the presence of a proton or sodium gradient. F-type ATPases consist of two structural domains, F(1) containing the extramembraneous catalytic core and F(0) containing the membrane proton channel, linked together by a central stalk and a peripheral stalk. During catalysis, ATP synthesis in the catalytic domain of F(1) is coupled via a rotary mechanism of the central stalk subunits to proton translocation. In terms of biological role, component of the F(0) channel, it forms part of the peripheral stalk, linking F(1) to F(0). The protein is ATP synthase subunit b 2 of Picosynechococcus sp. (strain ATCC 27264 / PCC 7002 / PR-6) (Agmenellum quadruplicatum).